A 384-amino-acid chain; its full sequence is 8-amino-7-oxononanoate synthase (384 aa).

Arginine 21 provides a ligand contact to substrate. 108 to 109 (GF) is a pyridoxal 5'-phosphate binding site. Histidine 133 contributes to the substrate binding site. Positions 179, 207, and 233 each coordinate pyridoxal 5'-phosphate. The residue at position 236 (lysine 236) is an N6-(pyridoxal phosphate)lysine. Residue threonine 352 coordinates substrate.

This sequence belongs to the class-II pyridoxal-phosphate-dependent aminotransferase family. BioF subfamily. In terms of assembly, homodimer. Requires pyridoxal 5'-phosphate as cofactor.

The enzyme catalyses 6-carboxyhexanoyl-[ACP] + L-alanine + H(+) = (8S)-8-amino-7-oxononanoate + holo-[ACP] + CO2. It functions in the pathway cofactor biosynthesis; biotin biosynthesis. Its function is as follows. Catalyzes the decarboxylative condensation of pimeloyl-[acyl-carrier protein] and L-alanine to produce 8-amino-7-oxononanoate (AON), [acyl-carrier protein], and carbon dioxide. This chain is 8-amino-7-oxononanoate synthase, found in Escherichia coli O9:H4 (strain HS).